The chain runs to 1355 residues: Patatin-like phospholipase domain-containing protein 6 (1355 aa).

The Lumenal portion of the chain corresponds to 1–43 (MGTPSHELNTTSSGAEVIQKTLEEGLGRRICVAQPVPFVPQVL). The N-linked (GlcNAc...) asparagine glycan is linked to N9. Residues 44-64 (GVMIGAGVAVLVTAVLILLVV) form a helical membrane-spanning segment. Topologically, residues 65–1355 (RRLRVQKTPA…QETPSSVADA (1291 aa)) are cytoplasmic. Residue 179-306 (VLGHFEKPLF…VRVVQIIMVR (128 aa)) participates in a nucleoside 3',5'-cyclic phosphate binding. Residue S338 is modified to Phosphoserine. The tract at residues 338 to 395 (SPGLPTRTSPVRGSKRVVSTSGTEDTSKETSGRPLDSIGAPLPGPAGDPVKPTSLEAP) is disordered. Residues 343–361 (TRTSPVRGSKRVVSTSGTE) are compositionally biased toward polar residues. T345 is modified (phosphothreonine). Residues S346, S356, and S405 each carry the phosphoserine modification. A nucleoside 3',5'-cyclic phosphate is bound by residues 492–614 (ELAK…VAAR) and 610–730 (TVAA…LSQK). A PNPLA domain is found at 961–1127 (LVLGGGGARG…INNLPADIAR (167 aa)). The GXGXXG motif lies at 965–970 (GGGARG). Positions 992 to 996 (GTSIG) match the GXSXG motif. The active-site Nucleophile is the S994. The active-site Proton acceptor is the D1114. A DGA/G motif is present at residues 1114 to 1116 (DGG). Residues 1286–1355 (SYVSDGCADG…QETPSSVADA (70 aa)) are disordered. Over residues 1293–1309 (ADGEESDCLTEYEEDAG) the composition is skewed to acidic residues.

Belongs to the NTE family. In terms of processing, glycosylated. Expressed in brain, testes and kidney (at protein level). Expressed ubiquitously in brain of young mice. Reaching adulthood, there is a most prominent expression in Purkinje cells, granule cells and pyramidal neurons of the hippocampus and some large neurons in the medulla oblongata, nucleus dentatus and pons.

It localises to the endoplasmic reticulum membrane. The enzyme catalyses a 1-acyl-sn-glycero-3-phosphocholine + H2O = sn-glycerol 3-phosphocholine + a fatty acid + H(+). The catalysed reaction is 1-hexadecanoyl-sn-glycero-3-phosphocholine + H2O = sn-glycerol 3-phosphocholine + hexadecanoate + H(+). It catalyses the reaction 1-hexadecanoyl-sn-glycero-3-phosphate + H2O = sn-glycerol 3-phosphate + hexadecanoate + H(+). It carries out the reaction 1-(9Z-octadecenoyl)-sn-glycero-3-phosphocholine + H2O = sn-glycerol 3-phosphocholine + (9Z)-octadecenoate + H(+). The enzyme catalyses 1-hexadecanoylglycerol + H2O = glycerol + hexadecanoate + H(+). The catalysed reaction is 2-hexadecanoylglycerol + H2O = glycerol + hexadecanoate + H(+). It catalyses the reaction 1-(9Z-octadecenoyl)-glycerol + H2O = glycerol + (9Z)-octadecenoate + H(+). It carries out the reaction 2-(9Z-octadecenoyl)-glycerol + H2O = glycerol + (9Z)-octadecenoate + H(+). The enzyme catalyses 2-(5Z,8Z,11Z,14Z-eicosatetraenoyl)-glycerol + H2O = glycerol + (5Z,8Z,11Z,14Z)-eicosatetraenoate + H(+). Its activity is regulated as follows. Inhibited by a series a OPs such as mipafox (MPX), phenyl saligenin phosphate (PSP), phenyl dipentyl phosphinate (PDPP), diisopropyl fluorophosphate and paraoxon. Phospholipase B that deacylates intracellular phosphatidylcholine (PtdCho), generating glycerophosphocholine (GroPtdCho). This deacylation occurs at both sn-2 and sn-1 positions of PtdCho. Catalyzes the hydrolysis of several naturally occurring membrane-associated lipids. Hydrolyzes lysophospholipids and monoacylglycerols, preferring the 1-acyl to the 2-acyl isomer. Does not catalyze hydrolysis of di- or triacylglycerols or fatty acid amides. The protein is Patatin-like phospholipase domain-containing protein 6 (Pnpla6) of Mus musculus (Mouse).